The primary structure comprises 297 residues: Transcription factor PCF8 (297 aa).

The tract at residues 1 to 22 is disordered; the sequence is MEEVVGGGKERKRPRGALVGVG. The region spanning 46-104 is the TCP domain; sequence GKDRHSKVVTSRGLRDRRVRLSVPTAIAFYDIQDRLGVDQPSKAIEWLIRAAAAAIDAL. Disordered regions lie at residues 116–136 and 273–297; these read AASS…SETS and AAPA…ERKT. Basic and acidic residues predominate over residues 282-297; that stretch reads GERRLQLWDFKEERKT.

In terms of assembly, forms homodimers and heterodimers.

It is found in the nucleus. Its function is as follows. Transcription activator. Binds the promoter core sequence 5'-GGNCC-3'. The polypeptide is Transcription factor PCF8 (PCF8) (Oryza sativa subsp. indica (Rice)).